A 384-amino-acid polypeptide reads, in one-letter code: MNMKTLLTYATLLSVTAFSHVVYADNQWPDLPTGFKDGVGAQVGSKVYVGLGSLGKSFYVLDLNALSKGWQKIADFTGAERSGATASVIGNYIYLFGGSGKAEPSDPSPILFDSVYRYDTKKDSWEKMNTTSPVGLLGASSYSPDNRQILFFGGYNKAYFDRYLRDISTTDKQVNPEVWQRIVDDYMGMTPTDYKWNRNVISYLPEKQEWRDLGVSTYLPNCGSATVIEGNKVTLISGEIKPGLRTAEVKQYEFGMDQPWKSLLPLPAPQTSNIQEGVAGAFSGKTNGVVVVAGGANFHGAKQAFENGKMFAHEGLPKAFNSEIYVEKEGIWSTVNSLPEGLAYGASFTTSEGVLIVGGEKSGKEMSHKVYMLAWNGSTVEVID.

Positions 1–24 (MNMKTLLTYATLLSVTAFSHVVYA) are cleaved as a signal peptide. Kelch repeat units lie at residues 46–90 (KVYV…SVIG), 92–145 (YIYL…YSPD), 147–184 (RQIL…RIVD), 185–230 (DYMG…VIEG), 233–281 (VTLI…VAGA), 303–352 (QAFE…TTSE), and 354–383 (VLIV…VEVI). E239 (proton acceptor) is an active-site residue.

The protein belongs to the NanM family. Homodimer.

Its subcellular location is the periplasm. It carries out the reaction N-acetyl-alpha-neuraminate = N-acetyl-beta-neuraminate. Its function is as follows. Converts alpha-N-acetylneuranimic acid (Neu5Ac) to the beta-anomer, accelerating the equilibrium between the alpha- and beta-anomers. Probably facilitates sialidase-negative bacteria to compete successfully for limited amounts of extracellular Neu5Ac, which is likely taken up in the beta-anomer. In addition, the rapid removal of sialic acid from solution might be advantageous to the bacterium to damp down host responses. This Vibrio cholerae serotype O1 (strain ATCC 39315 / El Tor Inaba N16961) protein is N-acetylneuraminate epimerase.